A 248-amino-acid polypeptide reads, in one-letter code: Probable transcriptional regulatory protein RPB_4273 (248 aa).

A disordered region spans residues 1–22 (MAGHSQFKNIMHRKGKQDAQRS).

It belongs to the TACO1 family.

It localises to the cytoplasm. The chain is Probable transcriptional regulatory protein RPB_4273 from Rhodopseudomonas palustris (strain HaA2).